The following is a 160-amino-acid chain: Protein MGF 300-2R (160 aa).

Belongs to the asfivirus MGF 300 family.

Plays a role in virus cell tropism, and may be required for efficient virus replication in macrophages. The chain is Protein MGF 300-2R from African swine fever virus (isolate Pig/Kenya/KEN-50/1950) (ASFV).